We begin with the raw amino-acid sequence, 448 residues long: Ribosomal protein uS12 methylthiotransferase RimO (448 aa).

The MTTase N-terminal domain occupies 16 to 126 (PRISFVSLGC…VVAAVHEAVP (111 aa)). Residues Cys-25, Cys-61, Cys-90, Cys-157, Cys-161, and Cys-164 each coordinate [4Fe-4S] cluster. The Radical SAM core domain maps to 143-380 (LTPRHYAYLK…MEAQSHVSLR (238 aa)). The TRAM domain maps to 383-448 (RAKVGKRLSV…DAYDLHGIAV (66 aa)).

The protein belongs to the methylthiotransferase family. RimO subfamily. The cofactor is [4Fe-4S] cluster.

Its subcellular location is the cytoplasm. The catalysed reaction is L-aspartate(89)-[ribosomal protein uS12]-hydrogen + (sulfur carrier)-SH + AH2 + 2 S-adenosyl-L-methionine = 3-methylsulfanyl-L-aspartate(89)-[ribosomal protein uS12]-hydrogen + (sulfur carrier)-H + 5'-deoxyadenosine + L-methionine + A + S-adenosyl-L-homocysteine + 2 H(+). Its function is as follows. Catalyzes the methylthiolation of an aspartic acid residue of ribosomal protein uS12. The protein is Ribosomal protein uS12 methylthiotransferase RimO of Methylorubrum extorquens (strain PA1) (Methylobacterium extorquens).